The primary structure comprises 130 residues: uncharacterized protein (130 aa).

This is an uncharacterized protein from Sulfolobus islandicus filamentous virus (isolate Iceland/Hveragerdi) (SIFV).